The sequence spans 4731 residues: MESEEGNAEPPPPSEEAPPPVVEEAPPPLPPEDTAPPPPEEQAPPPEGDAAPPPTGDAFQLTVEGEAPHPEDPKLLSEQGPATSVTDYRSLIPSDEEVTLPEDEESGQARVRARHTPRPAQSVLSDGISQSSRRPSKFRRSMTGIPNLQETLKEKQARFREARENRKMKIGPSHKYIFEVLGEKLGLDLVTVEELILDCPSLDPFTSFFEKGGCKTLKFLYQEGEVPGFECGRTITGVPKGGKMMRIYVDNAAPDKLKGLCLFFVRCRNDVAINSKTIHEDVLFSFLDASKGLLEGIKHMLKSIFLPAILATSNWGALNQSKQGESEKHIFIETIHRYLASLDDATISIEGTVMLKKVDNIDFSKLHTFEEVTAAASSSEMVHQLEEVLMVWYKQIEQVLIESEQMRKEADDSGPLTELEHWKRMSAKFNFIIEQIKGSNCKAVINVLNVAHSKLLKNWRDLDARITDSANESKDNVRYLYTLEKVCQPLYNYDLVSMAHGIQNLINAIRMIHSVSRYYNTSERMTSLFIKVTNQMVTACKAYITDGGTNHVWDQETPAVLKKIQDCIFLFKEYQASFHKTRKQILESSGEKSFEVSEMYIFGKFEAFCKRLEKITEMITIVQTYSALSNSTIEGIDILGIKFKNIYQGIKKNQYDILDPRRTEFDTDFTEFMGKINILEIQIQAFMNSTFGKILSSQQALQLLQRFQKLNIPCLHLEINHTIERILQCYVAELEFTKKLYLSQKDDPPLARNMPPIAGKILWVRQLFRRINEPINYFFKNSDILSSTEGKAVIRQYNRIAYVLVEFEVAYHTAWFKEVSQLQYALQATLFVRHPETGKLLVNFDPKILEVVRETKCMIKMKLDVPEQAKNLLKLESKLKADKLYLQGLLQYYDDLCQEVPSVFVNLMTPKMKKVESVLRQGLTVLTWSSLMLESFFKEVESVLDMFNQLLKKVNDLCEMHIDTVLKEIAKTLLISLSDSGTTKVEDMLTLNETYTKECADILNHKSRHVEEAVKELILIFEQIYEVKYTGKAAKSVKEQRKRVVFGSEAEETEGLDFESTTMEVDTNDKEDEFKKECKEVYAFFSHQLLDSLQKATRLSLDTMKRRIFVGSQGRRRSEDIVSFIKTEVHLAIPNVVMVPSLDDIQQAINRMIQLTLEVSRGVAHWGQQQVRQIKSFQNNSRGSDQPPASGKPLKKEERSFEETIPARKLKNFYPGVAEHKDISKLVLLLSSSVNSLRKAATEALQDFQKYKTLWIEDRHVKVKEFLANNPSLTEIRSEILHYATLEQEIKELKPIIVVGSLELHTEPMKLALSIEAKAWKMLLCRYLNEEYKKKMSDMITFINEYLKKLSRPIRDLDDVRFAMEALSCIRDNEIQMDMTLGPIEEAYGILNRFEVKVTKEESEGVDTLRYSFNKLQSKAVSVQGELVKVQPKFKSNLLESVKVFCEDVINFTEAYETEGPMVPNIPPQEASNRLQIFQANFDDLWRKFVTYSSGEQLFGLPVTDYEVLHKTRKELNLLQKLYGLYDTVMGSISGYYEILWGDVDIEKINAELQEFQNRCRKLPRALKDWQAFLDLKKRIDDFSESCPLLEMMTNKAMKQRHWDRISELTGTPFDVESDTFCLRNIMEAPLLKNKDDIEDICISAIKEKDIEAKLTQVIENWTYQNLSFAAFKGKGELLLKGTESGEIITLMEDSLMVLGSLLSNRYNTPFKKNIQNWVFKLSTSSDIIEEWLIVQNLWVYLEAVFVGGDIAKQLPQEAKRFQNIDKSWIKIMQRAHENPNVISCCVGDETMGQLLPHLHEQLEVCQKSLTGYLEKKRLLFPRFFFVSDPVLLEILGQASDSHTIQPHLPAVSDNINEVTFHAKDYDRMTAVISREGEKIMLDTPVMAKGPVEIWLLDLLKVQMSSLHNIIRSAFYQISDSGFLLLPFLNHFPAQVGLLGIQMLWTHDSEEALNNAKDDRKIMQITNQKFLDILNTLISQTTHDLTKFDRVKFETLITIHVHQRDIFDDLVKMHIKSVTDFEWLKQSRFYFKEDLDQTVVSITDVDFIYQNEFLGCTDRLVITPLTDRCYITLAQALGMNMGGAPAGPAGTGKTETTKDMGRCLGKYVVVFNCSDQMDFRGLGRIFKGLAQSGSWGCFDEFNRIELPVLSVAAQQIYIVLTARKERKKQFIFSDGDCVDLNPEFGIFLTMNPGYAGRQELPENLKIQFRTVAMMVPDRQIIMRVKLASCGFLENVILAQKFYVLYKLCEEQLTKQVHYDFGLRNILSVLRTLGSQKRARPEDSELSTVMRGLRDMNLSKLVDEDEPLFLSLINDLFPGLQLDSSTYAELQSAVDNQVNLEGLINHPPWNLKLVQLYETSLVRHGLMTLGPSGSGKTTVITILMKSLTECGRPHREMRMNPKAITAPQMFGRLDTATNDWTDGIFSTLWRKTLKAKKGENIFLILDGPVDAIWIENLNSVLDDNKTLTLANGDRIPMAPTCKLLFEVHNIENASPATVSRMGMVYISSSALSWRPILQAWLKKRSQQEASVFLSLYDKVFEDAYTYMKLSLNPKMQLLECNYIMQSLNLLEGLIPSKEEGGVSSGDHLHKLFVFGLMWSLGALLELDSREKLEVFLRGHGSKLNLPEIPKGSQQTMYEFYVTDYGDWEHWNKRIQPYFYPTDSIPEYSSILVPNVDNIRTNFLIDTIAKQHKAVLLTGEQGTAKTVMVKAYLKKYDPEVQLSKSLNFSSATEPMMFQRTIESYVDKRMGSTYGPPGGRKMTVFIDDINMPVINEWGDQITNEIVRQMMEMEGMYSLDKPGDFTTIVDVQLIAAMIHPGGGRNDIPQRLKRQFTVFNCTLPSNTSIDKIFGIIGCGYFDPCRKFRPEICDMVGNLVSVSRVLWQWTKVKMLPTPSKFHYIFNLRDLSRIWQGMLTVKAEECSSIPILLSLFKHECNRVIADRFITPDDEQWFNSQLIRAVEENISPEVAANILPEPYFVDFLRDMPEPTGDEPEDTMFEVPKIYELVPSFEFLSEKLQFYQRQFNEIIRGTSLDLVFFKDAMTHLVKISRIIRTSCGNALLVGVGGSGKQSLSKLASFIAGYQIFQITLTRSYNVSNLIEDLKNLYKVAGAEGKGITFIFTDNEIKDEAFLEYLNNLLSSGEISNLFARDEMDEITQGLISVMKRELPRHPPTFDNLYEYFITRSRKNLHVVLCFSPVGEKFRARSLKFPGLISGCTMDWFSRWPKEALIAVASYFLLDYNIVCSIETKRHVVETMGLFHDMVSESCENYFQRYRRRAHVTPKSYLSFINGYKSIYTDKVKYINEQAERMNIGLDKLMEASESVAKLSQDLAVKEKELAVASIKADEVLAEVTVSAQASAKVKNEVQEVKDKAQKIVDEIDSEKVKAETKLEAAKPALEEAEAALNTIKPNDIATVRKLAKPPHLIMRIMDCVLLLFQKKIDPVTMDPEKPCCKPSWGESLKLMSATGFLFSLQQFPKDTINEETVELLQPYFNMDDYTFESAKKVCGNVAGLLSWTLAMVIFYGINREVLPLKANLAKQEGRLAVANVELGKAQALLDEKQAELDKVQAKFDAAMKEKMDLLNDADMCRKKMQAASTLIDGLSGEKVRWTQQSKEFKTQINRLVGDVLLCTGFLSYLGPFNQIFRNYLLKDQWELELKARKIPFTENLNLIAMLVDPPTIGEWGLQGLPGDDLSIQNGIIVTKATRYPLLIDPQTQGKTWIKSKEKENDLQVTSLNHKYFRTHLEDSLSLGRPLLIEDIREELDPALDNVLEKNFIKSGTAFKVKVGDKECDIMDTFKLYITTKLPNPAFTPEINAKTSVIDFTVTMKGLENQLLRRVILTEKQELESERVKLLEDVTFNKRKMKELEDNLLYKLSATKGSLVDDESLIGVLRITKQTAAEVSEKLHVAAETEIKINTAQEEFRPAATRGSILYFLITEMSMVNIMYQTSLAQFLKLFDQSMARSEKSPLPQKRITNIIEYLTYEVFTYSVRGLYENHKFLFVLLMTLKIDLQRGTVKHKEFQALIKGGAALDLKACPPKPFRWILDMTWLNLVELSKLPQFAEIMNQISRNEKGWKNWFDKDAPEEEIIPDGYNDSLDTCRKLLLIRSWCPDRTVFQARKYIADSLEEKYTEPVILNLEKTWEESDTHTPLICFLSMGSDPTIQIDALAKKLKLECRTISMGQGQEVHARKLIQLSMQQGGWVLLQNCHLGLEFMEELLEMLMVTETTEDSFRVWITTEPHDRFPITLLQTSIKFTNEPPQGVRAGLKRTFAGINQDLLDISNLPMWKPMLYTVAFLHSTVQERRKFGPLGWNIPYEFNSADFSASVQFIQNHLDECDIKKGVSWSTVRYMIGEVQYGGRVTDDFDKRLLNCFARVWFSEKMFEPSFCFYTGYKIPICKTLDQYFEFIQSLPSLDNPEVFGLHPNADITYQSNTASDVLETITNIQPKESGGGVGETREAIVYRLSEDMLSKLPPNYVPHEVKARLMKMGHLNSMNIFLRQEIDRMQKVISILRSSLSDLKLAIEGTIIMSENLRDALDNMYDARIPQLWKRVSWDSSTLGFWFTELLERNAQFSTWIFEGRPNVFWMTGFFNPQGFLTAMRQEVTRAHKGWALDTVTIHNEVLRQTKEEIITPPAEGVYIYGLYMDGASWDRRNGKLTESTPKVLFTQLPVLHIFAINSTAPKDPKLYVCPIYKKPRRTDLTFITVVYLRTVLSPDHWILRGVALLCDIK.

Residues 1 to 145 (MESEEGNAEP…SKFRRSMTGI (145 aa)) form a disordered region. The span at 9-55 (EPPPPSEEAPPPVVEEAPPPLPPEDTAPPPPEEQAPPPEGDAAPPPT) shows a compositional bias: pro residues. Basic and acidic residues predominate over residues 66-75 (EAPHPEDPKL). Over residues 94–106 (SDEEVTLPEDEES) the composition is skewed to acidic residues. Residues 122–133 (SVLSDGISQSSR) show a composition bias toward polar residues. Residues 145 to 169 (IPNLQETLKEKQARFREARENRKMK) adopt a coiled-coil conformation. Serine 917 is modified (phosphoserine). The disordered stretch occupies residues 1177–1201 (FQNNSRGSDQPPASGKPLKKEERSF). Residues 1543–1567 (DVDIEKINAELQEFQNRCRKLPRAL) adopt a coiled-coil conformation. AAA stretches follow at residues 2049–2271 (YQNE…VLRT), 2331–2550 (SAVD…KLSL), 2657–2910 (FYPT…IWQG), and 3021–3275 (QFNE…YRRR). ATP is bound by residues 2087 to 2094 (GPAGTGKT) and 2369 to 2376 (GPSGSGKT). The interval 3290–3587 (YKSIYTDKVK…MDLLNDADMC (298 aa)) is stalk. Coiled-coil stretches lie at residues 3313–3405 (DKLM…ALNT), 3531–3583 (LKAN…LLND), and 3836–3871 (RVILTEKQELESERVKLLEDVTFNKRKMKELEDNLL). 2 AAA regions span residues 3673–3903 (LVDP…EVSE) and 4118–4332 (ARKY…FIQN).

This sequence belongs to the dynein heavy chain family. As to quaternary structure, consists of at least two heavy chains and a number of intermediate and light chains. In terms of tissue distribution, isoform 1 and/or isoform 2 are expressed in spermatocytes and mature sperm (at protein level). Testis-specific. Accumulates exclusively in mid to late spermatocytes.

It localises to the cytoplasm. Its subcellular location is the cytoskeleton. The protein localises to the flagellum axoneme. Functionally, force generating protein component of the outer dynein arms (ODAs) in the sperm flagellum. Produces force towards the minus ends of microtubules. Dynein has ATPase activity; the force-producing power stroke is thought to occur on release of ADP. Involved in sperm motility; implicated in sperm flagellar assembly. The sequence is that of Dynein axonemal heavy chain 8 (Dnah8) from Mus musculus (Mouse).